The sequence spans 212 residues: uncharacterized protein (212 aa).

A disordered region spans residues 47-129 (RELLDRRRSQ…GNIDNGQPRR (83 aa)).

This is an uncharacterized protein from Caenorhabditis elegans.